The primary structure comprises 25 residues: Pregnancy-associated glycoprotein 59g (25 aa).

N4 is a glycosylation site (N-linked (GlcNAc...) asparagine).

It belongs to the peptidase A1 family. Highly expressed in the placenta between day 60 and day 100 of gestation.

Its subcellular location is the secreted. It localises to the extracellular space. This chain is Pregnancy-associated glycoprotein 59g, found in Ovis aries (Sheep).